Reading from the N-terminus, the 278-residue chain is Troponin T, slow skeletal muscle (278 aa).

Residues 1 to 37 (MSDTEEQEYEEEQPEEEAAEEEEEAPEEPEPVAEPEE) show a composition bias toward acidic residues. Disordered stretches follow at residues 1–63 (MSDT…RVDF) and 105–153 (RRRS…KKKV). Serine 2 carries the post-translational modification Phosphoserine; by CK2. The span at 43 to 55 (SRPVVPPLIPPKI) shows a compositional bias: pro residues. Residues 105-149 (RRRSERAEQQRFRTEKERERQAKLAEEKMRKEEEEAKKRAEDDAK) are compositionally biased toward basic and acidic residues.

The protein belongs to the troponin T family. As to quaternary structure, interacts with TPM3.

In terms of biological role, troponin T is the tropomyosin-binding subunit of troponin, the thin filament regulatory complex which confers calcium-sensitivity to striated muscle actomyosin ATPase activity. This Homo sapiens (Human) protein is Troponin T, slow skeletal muscle (TNNT1).